We begin with the raw amino-acid sequence, 329 residues long: Formimidoylglutamase (329 aa).

Mn(2+) is bound by residues His133, Asp159, His161, Asp163, Asp253, and Asp255.

This sequence belongs to the arginase family. Mn(2+) is required as a cofactor.

The catalysed reaction is N-formimidoyl-L-glutamate + H2O = formamide + L-glutamate. It participates in amino-acid degradation; L-histidine degradation into L-glutamate; L-glutamate from N-formimidoyl-L-glutamate (hydrolase route): step 1/1. In terms of biological role, catalyzes the conversion of N-formimidoyl-L-glutamate to L-glutamate and formamide. In Streptococcus gordonii (strain Challis / ATCC 35105 / BCRC 15272 / CH1 / DL1 / V288), this protein is Formimidoylglutamase.